We begin with the raw amino-acid sequence, 801 residues long: tRNA(Met) cytidine acetyltransferase TmcA (801 aa).

ATP-binding positions include Gln228, 256–265, and Arg412; that span reads GRGKSSAVGL. In terms of domain architecture, N-acetyltransferase spans 457-637; that stretch reads EELFLKNEEE…YTVIVVKPLS (181 aa). Acetyl-CoA contacts are provided by residues 562-564, 569-575, and Glu602; these read IAT and MGKGLGS.

This sequence belongs to the RNA cytidine acetyltransferase family. TmcA subfamily.

Its subcellular location is the cytoplasm. The enzyme catalyses cytidine(34) in elongator tRNA(Met) + acetyl-CoA + ATP + H2O = N(4)-acetylcytidine(34) in elongator tRNA(Met) + ADP + phosphate + CoA + H(+). In terms of biological role, catalyzes the formation of N(4)-acetylcytidine (ac(4)C) at the wobble position of tRNA(Met), by using acetyl-CoA as an acetyl donor and ATP (or GTP). The chain is tRNA(Met) cytidine acetyltransferase TmcA from Thermofilum pendens (strain DSM 2475 / Hrk 5).